Consider the following 325-residue polypeptide: Elongation factor P--(R)-beta-lysine ligase (325 aa).

Residue 76 to 78 coordinates substrate; it reads SPE. Residues 100–102 and N109 contribute to the ATP site; that span reads RNE. Residue Y118 participates in substrate binding. 244–245 is a binding site for ATP; the sequence is EL. Position 251 (E251) interacts with substrate. An ATP-binding site is contributed by G300.

This sequence belongs to the class-II aminoacyl-tRNA synthetase family. EpmA subfamily. In terms of assembly, homodimer.

It catalyses the reaction D-beta-lysine + L-lysyl-[protein] + ATP = N(6)-((3R)-3,6-diaminohexanoyl)-L-lysyl-[protein] + AMP + diphosphate + H(+). Functionally, with EpmB is involved in the beta-lysylation step of the post-translational modification of translation elongation factor P (EF-P). Catalyzes the ATP-dependent activation of (R)-beta-lysine produced by EpmB, forming a lysyl-adenylate, from which the beta-lysyl moiety is then transferred to the epsilon-amino group of a conserved specific lysine residue in EF-P. The chain is Elongation factor P--(R)-beta-lysine ligase from Sodalis glossinidius (strain morsitans).